A 189-amino-acid polypeptide reads, in one-letter code: uncharacterized protein (189 aa).

The N-terminal stretch at 1–23 (MIKTTPHKIVILMGILLSPSVFA) is a signal peptide. Residues 104 to 125 (SSPKLIIPQSGDSSSTTSNIGM) form a disordered region. The segment covering 113-123 (SGDSSSTTSNI) has biased composition (polar residues).

The protein belongs to the fimbrial protein family.

It localises to the fimbrium. Part of the yadCKLM-htrE-yadVN fimbrial operon. Could contribute to adhesion to various surfaces in specific environmental niches. This is an uncharacterized protein from Escherichia coli (strain K12).